A 428-amino-acid chain; its full sequence is Histone-lysine N-methyltransferase SMYD3 (428 aa).

N-acetylmethionine is present on Met-1. The region spanning 4–240 (LKVEKFTTAN…AGEELTICYL (237 aa)) is the SET domain. 14–16 (RGN) contacts S-adenosyl-L-methionine. Residues Cys-49, Cys-52, Cys-62, Cys-65, Cys-71, Cys-75, His-83, and Cys-87 each contribute to the Zn(2+) site. The MYND-type zinc finger occupies 49–87 (CDRCLLGKEKLMRCSQCRIAKYCSAKCQKKAWPDHRREC). S-adenosyl-L-methionine is bound by residues Tyr-124, Asn-132, 205–206 (NH), Tyr-239, and Phe-259. The segment at 272 to 428 (DADMLTGDEQ…EECDANIRAS (157 aa)) is C-terminal domain; essential for histone methyltransferase activity, nuclear localization and mediates interaction with HSP90AA1.

Belongs to the class V-like SAM-binding methyltransferase superfamily. Histone-lysine methyltransferase family. In terms of assembly, interacts with HSPCA. Interacts with HELZ. Interacts with POLR2A; the interaction may be indirect and may be mediated by HELZ. Interacts with HSP90AA1; this interaction enhances SMYD3 histone-lysine N-methyltransferase.

Its subcellular location is the cytoplasm. It localises to the nucleus. The catalysed reaction is L-lysyl(4)-[histone H3] + 3 S-adenosyl-L-methionine = N(6),N(6),N(6)-trimethyl-L-lysyl(4)-[histone H3] + 3 S-adenosyl-L-homocysteine + 3 H(+). With respect to regulation, histone methyltransferase activity strongly stimulated by HSPCA. In terms of biological role, histone methyltransferase. Specifically methylates 'Lys-4' of histone H3, inducing di- and tri-methylation, but not monomethylation. Also methylates 'Lys-5' of histone H4. Plays an important role in transcriptional activation as a member of an RNA polymerase complex. Binds DNA containing 5'-CCCTCC-3' or 5'-GAGGGG-3' sequences. The protein is Histone-lysine N-methyltransferase SMYD3 (Smyd3) of Mus musculus (Mouse).